Here is a 413-residue protein sequence, read N- to C-terminus: Corticotropin-releasing factor receptor 2 (413 aa).

Residues 1–22 (MDSTIFEIIIDEFDANCSLLDA) constitute a signal peptide (not cleaved). Over 1-110 (MDSTIFEIII…CVPILDNKRK (110 aa)) the chain is Extracellular. N16 carries N-linked (GlcNAc...) asparagine glycosylation. 3 disulfide bridges follow: C17-C53, C43-C86, and C67-C101. N77, N89, and N97 each carry an N-linked (GlcNAc...) asparagine glycan. A helical membrane pass occupies residues 111–141 (YALHYKIALIINYLGHCISILALVIAFLLFL). The Cytoplasmic segment spans residues 142–148 (CLRSIRC). Residues 149–173 (LRNIIHWNLITTFILRNIMWFLLQM) form a helical membrane-spanning segment. Over 174–187 (IDHNIHESNEVWCR) the chain is Extracellular. A disulfide bridge links C186 with C256. The helical transmembrane segment at 188–216 (CITTIYNYFVVTNFFWMFVEGCYLHTAIV) threads the bilayer. Residues 217–223 (MTYSTDK) are Cytoplasmic-facing. The chain crosses the membrane as a helical span at residues 224–251 (LRKWVFLFIGWCIPSPIIVTWAICKLFY). At 252–267 (ENEQCWIGKEPGKYID) the chain is on the extracellular side. A helical membrane pass occupies residues 268 to 293 (YIYQGRVILVLLINFVFLFNIVRILM). Over 294 to 304 (TKLRASTTSET) the chain is Cytoplasmic. A helical transmembrane segment spans residues 305–329 (IQYRKAVKATLVLLPLLGITYMLFF). Over 330–336 (VNPGEDD) the chain is Extracellular. The chain crosses the membrane as a helical span at residues 337–366 (VSQIVFIYFNSFLQSFQGFFVSVFYCFLNG). Over 367 to 413 (EVRSAARKRWHRWQDHHSLRVRVARAMSIPTSPTRISFHSIKQTAAV) the chain is Cytoplasmic.

Belongs to the G-protein coupled receptor 2 family. Post-translationally, a N-glycosylation site within the signal peptide impedes its proper cleavage and function.

It is found in the cell membrane. G-protein coupled receptor for CRH (corticotropin-releasing factor), UCN (urocortin), UCN2 and UCN3. Has high affinity for UCN. Ligand binding causes a conformation change that triggers signaling via guanine nucleotide-binding proteins (G proteins) and down-stream effectors, such as adenylate cyclase. Promotes the activation of adenylate cyclase, leading to increased intracellular cAMP levels. The chain is Corticotropin-releasing factor receptor 2 (crhr2) from Xenopus laevis (African clawed frog).